Here is a 353-residue protein sequence, read N- to C-terminus: Ferredoxin--NADP reductase 1 (353 aa).

8 residues coordinate FAD: threonine 14, aspartate 33, glutamine 41, tyrosine 46, alanine 86, phenylalanine 121, aspartate 289, and threonine 330.

This sequence belongs to the ferredoxin--NADP reductase type 2 family. In terms of assembly, homodimer. Requires FAD as cofactor.

It catalyses the reaction 2 reduced [2Fe-2S]-[ferredoxin] + NADP(+) + H(+) = 2 oxidized [2Fe-2S]-[ferredoxin] + NADPH. The protein is Ferredoxin--NADP reductase 1 of Christiangramia forsetii (strain DSM 17595 / CGMCC 1.15422 / KT0803) (Gramella forsetii).